A 324-amino-acid chain; its full sequence is Rho crystallin (324 aa).

Residue T2 is modified to N-acetylthreonine. An NADP(+)-binding site is contributed by S218–N281.

Belongs to the aldo/keto reductase family. As to quaternary structure, monomer.

The protein is Rho crystallin of Rana temporaria (European common frog).